A 282-amino-acid chain; its full sequence is Formate channel FocB (282 aa).

The Cytoplasmic segment spans residues Met-1–Phe-35. The chain crosses the membrane as a helical span at residues Leu-36–Ile-56. Residues Ala-57–Leu-68 are Periplasmic-facing. Residues Val-69 to Phe-89 traverse the membrane as a helical segment. Residues Thr-90–Asn-112 are Cytoplasmic-facing. The chain crosses the membrane as a helical span at residues Ala-113–Phe-133. The Periplasmic portion of the chain corresponds to Ser-134 to Ser-163. A helical transmembrane segment spans residues Val-164 to Gly-184. Residues Arg-185 to Lys-190 lie on the Cytoplasmic side of the membrane. Residues Ile-191–Ala-211 traverse the membrane as a helical segment. Residues Asn-212–His-248 lie on the Periplasmic side of the membrane. A helical membrane pass occupies residues Phe-249–Val-269. The Cytoplasmic portion of the chain corresponds to Ser-270 to Pro-282.

Belongs to the FNT transporter (TC 1.A.16) family.

Its subcellular location is the cell inner membrane. The catalysed reaction is formate(in) = formate(out). Its activity is regulated as follows. The direction of formate translocation depends on external pH and electron donor source. Involved in the bidirectional transport of formate during mixed-acid fermentation. The polypeptide is Formate channel FocB (Escherichia coli (strain K12)).